The sequence spans 238 residues: Purine nucleoside phosphorylase DeoD-type (238 aa).

Histidine 4 contributes to the a purine D-ribonucleoside binding site. Phosphate is bound by residues glycine 20, arginine 24, arginine 43, and 87 to 90 (RVGS). A purine D-ribonucleoside contacts are provided by residues 179–181 (EME) and 203–204 (SD). Catalysis depends on aspartate 204, which acts as the Proton donor.

The protein belongs to the PNP/UDP phosphorylase family. Homohexamer; trimer of homodimers.

It catalyses the reaction a purine D-ribonucleoside + phosphate = a purine nucleobase + alpha-D-ribose 1-phosphate. The catalysed reaction is a purine 2'-deoxy-D-ribonucleoside + phosphate = a purine nucleobase + 2-deoxy-alpha-D-ribose 1-phosphate. Its function is as follows. Catalyzes the reversible phosphorolytic breakdown of the N-glycosidic bond in the beta-(deoxy)ribonucleoside molecules, with the formation of the corresponding free purine bases and pentose-1-phosphate. This is Purine nucleoside phosphorylase DeoD-type from Histophilus somni (strain 2336) (Haemophilus somnus).